A 125-amino-acid chain; its full sequence is Ribosome-binding factor A (125 aa).

It belongs to the RbfA family. As to quaternary structure, monomer. Binds 30S ribosomal subunits, but not 50S ribosomal subunits or 70S ribosomes.

The protein resides in the cytoplasm. In terms of biological role, one of several proteins that assist in the late maturation steps of the functional core of the 30S ribosomal subunit. Associates with free 30S ribosomal subunits (but not with 30S subunits that are part of 70S ribosomes or polysomes). Required for efficient processing of 16S rRNA. May interact with the 5'-terminal helix region of 16S rRNA. In Akkermansia muciniphila (strain ATCC BAA-835 / DSM 22959 / JCM 33894 / BCRC 81048 / CCUG 64013 / CIP 107961 / Muc), this protein is Ribosome-binding factor A.